Here is a 407-residue protein sequence, read N- to C-terminus: Succinyl-diaminopimelate desuccinylase (407 aa).

Polar residues predominate over residues 1 to 10; sequence MSDIDNNLTS. The interval 1–20 is disordered; sequence MSDIDNNLTSQTHQQATHQQ. A compositionally biased stretch (low complexity) spans 11 to 20; the sequence is QTHQQATHQQ. H93 is a binding site for Zn(2+). The active site involves D95. Position 126 (D126) interacts with Zn(2+). E160 acts as the Proton acceptor in catalysis. Residues E161, E189, and H379 each coordinate Zn(2+).

The protein belongs to the peptidase M20A family. DapE subfamily. As to quaternary structure, homodimer. It depends on Zn(2+) as a cofactor. Requires Co(2+) as cofactor.

The enzyme catalyses N-succinyl-(2S,6S)-2,6-diaminopimelate + H2O = (2S,6S)-2,6-diaminopimelate + succinate. It functions in the pathway amino-acid biosynthesis; L-lysine biosynthesis via DAP pathway; LL-2,6-diaminopimelate from (S)-tetrahydrodipicolinate (succinylase route): step 3/3. Catalyzes the hydrolysis of N-succinyl-L,L-diaminopimelic acid (SDAP), forming succinate and LL-2,6-diaminopimelate (DAP), an intermediate involved in the bacterial biosynthesis of lysine and meso-diaminopimelic acid, an essential component of bacterial cell walls. This chain is Succinyl-diaminopimelate desuccinylase, found in Psychrobacter arcticus (strain DSM 17307 / VKM B-2377 / 273-4).